A 316-amino-acid polypeptide reads, in one-letter code: ATP synthase gamma chain (316 aa).

It belongs to the ATPase gamma chain family. In terms of assembly, F-type ATPases have 2 components, CF(1) - the catalytic core - and CF(0) - the membrane proton channel. CF(1) has five subunits: alpha(3), beta(3), gamma(1), delta(1), epsilon(1). CF(0) has three main subunits: a, b and c.

It is found in the cellular thylakoid membrane. In terms of biological role, produces ATP from ADP in the presence of a proton gradient across the membrane. The gamma chain is believed to be important in regulating ATPase activity and the flow of protons through the CF(0) complex. In Prochlorococcus marinus (strain MIT 9303), this protein is ATP synthase gamma chain.